The chain runs to 584 residues: Aspartate--tRNA(Asp/Asn) ligase (584 aa).

L-aspartate is bound at residue E177. The aspartate stretch occupies residues 201-204 (QLFK). An L-aspartate-binding site is contributed by R223. ATP is bound by residues 223–225 (RDE) and Q232. An L-aspartate-binding site is contributed by H447. E481 is an ATP binding site. Residue R488 coordinates L-aspartate. An ATP-binding site is contributed by 533 to 536 (GLDR).

Belongs to the class-II aminoacyl-tRNA synthetase family. Type 1 subfamily. As to quaternary structure, homodimer.

It localises to the cytoplasm. It catalyses the reaction tRNA(Asx) + L-aspartate + ATP = L-aspartyl-tRNA(Asx) + AMP + diphosphate. Aspartyl-tRNA synthetase with relaxed tRNA specificity since it is able to aspartylate not only its cognate tRNA(Asp) but also tRNA(Asn). Reaction proceeds in two steps: L-aspartate is first activated by ATP to form Asp-AMP and then transferred to the acceptor end of tRNA(Asp/Asn). The polypeptide is Aspartate--tRNA(Asp/Asn) ligase (Chlamydia pneumoniae (Chlamydophila pneumoniae)).